Here is a 350-residue protein sequence, read N- to C-terminus: Biotin synthase (350 aa).

Positions 54 to 278 (REIQLSTLLS…TMPQSYVRLS (225 aa)) constitute a Radical SAM core domain. [4Fe-4S] cluster-binding residues include cysteine 69, cysteine 73, and cysteine 76. [2Fe-2S] cluster is bound by residues cysteine 113, cysteine 144, cysteine 204, and arginine 276.

Belongs to the radical SAM superfamily. Biotin synthase family. In terms of assembly, homodimer. [4Fe-4S] cluster serves as cofactor. Requires [2Fe-2S] cluster as cofactor.

It carries out the reaction (4R,5S)-dethiobiotin + (sulfur carrier)-SH + 2 reduced [2Fe-2S]-[ferredoxin] + 2 S-adenosyl-L-methionine = (sulfur carrier)-H + biotin + 2 5'-deoxyadenosine + 2 L-methionine + 2 oxidized [2Fe-2S]-[ferredoxin]. It functions in the pathway cofactor biosynthesis; biotin biosynthesis; biotin from 7,8-diaminononanoate: step 2/2. Functionally, catalyzes the conversion of dethiobiotin (DTB) to biotin by the insertion of a sulfur atom into dethiobiotin via a radical-based mechanism. The protein is Biotin synthase of Neisseria meningitidis serogroup B (strain ATCC BAA-335 / MC58).